We begin with the raw amino-acid sequence, 307 residues long: Ornithine carbamoyltransferase (307 aa).

Residues 50 to 53 (STRT), Q77, R101, and 128 to 131 (HPCQ) contribute to the carbamoyl phosphate site. L-ornithine-binding positions include N160, D224, and 228–229 (SM). Carbamoyl phosphate-binding positions include 264 to 265 (CL) and R292.

Belongs to the aspartate/ornithine carbamoyltransferase superfamily. OTCase family. In terms of assembly, homotrimer.

Its subcellular location is the cytoplasm. The catalysed reaction is carbamoyl phosphate + L-ornithine = L-citrulline + phosphate + H(+). It participates in amino-acid biosynthesis; L-arginine biosynthesis; L-arginine from L-ornithine and carbamoyl phosphate: step 1/3. Reversibly catalyzes the transfer of the carbamoyl group from carbamoyl phosphate (CP) to the N(epsilon) atom of ornithine (ORN) to produce L-citrulline, which is a substrate for argininosuccinate synthetase, the enzyme involved in the final step in arginine biosynthesis. This is Ornithine carbamoyltransferase (argF) from Mycobacterium bovis (strain ATCC BAA-935 / AF2122/97).